Consider the following 322-residue polypeptide: Picrinine-N-methytransferase (322 aa).

An SAM motif I region spans residues 103–112 (MLDVGCGLGG). The interval 166-174 (GTFDLVFTI) is SAM motif II. The SAM motif III stretch occupies residues 193–202 (VAAPGAPVVI).

This sequence belongs to the class I-like SAM-binding methyltransferase superfamily. gTMT family. In terms of assembly, homodimer. In terms of tissue distribution, accumulates in tissues actively synthesizing monoterpenoid indole alkaloids (MIAs) (at protein level). Mainly expressed in young leaves, but barely in roots and stems.

It is found in the cytoplasm. The protein resides in the cytosol. The enzyme catalyses picrinine + S-adenosyl-L-methionine = ervincine + S-adenosyl-L-homocysteine + H(+). The protein operates within alkaloid biosynthesis; vindoline biosynthesis. Functionally, S-adenosyl-L-methionine-dependent N-methyltransferase involved in the biosynthesis of biologically active monoterpenoid indole alkaloids (MIAs) natural products including vindoline. Catalyzes the conversion of picrinine to N-methylpicrinine (ervincine). Also accepts, with low efficiency, 21-hydroxycyclolochnericine and norajmaline as substrates. The protein is Picrinine-N-methytransferase of Vinca minor (Common periwinkle).